We begin with the raw amino-acid sequence, 364 residues long: Dimethylsulfoniopropionate demethylase DmdA (364 aa).

It belongs to the GcvT family. DmdA subfamily.

The enzyme catalyses S,S-dimethyl-beta-propiothetin + (6S)-5,6,7,8-tetrahydrofolate = 3-(methylsulfanyl)propanoate + (6S)-5-methyl-5,6,7,8-tetrahydrofolate + H(+). Functionally, involved in the assimilation of dimethylsulphoniopropionate (DMSP), an important compound in the fixation of carbon in marine phytoplankton, by mediating demethylation of dimethylsulfoniopropionate (DMSP) to methyl-mercaptopropionate (MMPA). The intracellular concentration of DMSP is estimated to be 70 mM. The chain is Dimethylsulfoniopropionate demethylase DmdA from Ruegeria pomeroyi (strain ATCC 700808 / DSM 15171 / DSS-3) (Silicibacter pomeroyi).